The chain runs to 536 residues: Putative beta-xylosidase (536 aa).

Residue D14 is the Proton acceptor of the active site. Catalysis depends on E186, which acts as the Proton donor.

This sequence belongs to the glycosyl hydrolase 43 family.

The catalysed reaction is Hydrolysis of (1-&gt;4)-beta-D-xylans, to remove successive D-xylose residues from the non-reducing termini.. The polypeptide is Putative beta-xylosidase (yagH) (Escherichia coli (strain K12)).